The primary structure comprises 419 residues: Histidine--tRNA ligase (419 aa).

It belongs to the class-II aminoacyl-tRNA synthetase family. In terms of assembly, homodimer.

Its subcellular location is the cytoplasm. The enzyme catalyses tRNA(His) + L-histidine + ATP = L-histidyl-tRNA(His) + AMP + diphosphate + H(+). This Novosphingobium aromaticivorans (strain ATCC 700278 / DSM 12444 / CCUG 56034 / CIP 105152 / NBRC 16084 / F199) protein is Histidine--tRNA ligase.